Consider the following 717-residue polypeptide: HHIP-like protein 2 (717 aa).

Positions 1–40 (MLGKHTSPHTVPGHRAPWLSPGIFCLGLPFLLGWVGLLQG) are cleaved as a signal peptide. Disulfide bonds link Cys203/Cys545, Cys207/Cys551, Cys423/Cys441, and Cys508/Cys607. The disordered stretch occupies residues 642-717 (ARKASNATFT…MRQAAGRSHP (76 aa)). Positions 646-662 (SNATFTSSSDRVASQKG) are enriched in polar residues. An N-linked (GlcNAc...) asparagine glycan is attached at Asn647. Residues 672–687 (SSKKTFRRPGTKKKSR) are compositionally biased toward basic residues.

This sequence belongs to the HHIP family.

Its subcellular location is the secreted. The protein is HHIP-like protein 2 (Hhipl2) of Mus musculus (Mouse).